We begin with the raw amino-acid sequence, 222 residues long: Octanoyltransferase (222 aa).

Positions 34 to 214 (GEAPSTVLLL…EFRKHEEALV (181 aa)) constitute a BPL/LPL catalytic domain. Substrate-binding positions include 72-79 (RGGKLTWH), 144-146 (AIG), and 157-159 (GVA). Residue Cys-175 is the Acyl-thioester intermediate of the active site.

It belongs to the LipB family.

Its subcellular location is the cytoplasm. The catalysed reaction is octanoyl-[ACP] + L-lysyl-[protein] = N(6)-octanoyl-L-lysyl-[protein] + holo-[ACP] + H(+). It participates in protein modification; protein lipoylation via endogenous pathway; protein N(6)-(lipoyl)lysine from octanoyl-[acyl-carrier-protein]: step 1/2. Catalyzes the transfer of endogenously produced octanoic acid from octanoyl-acyl-carrier-protein onto the lipoyl domains of lipoate-dependent enzymes. Lipoyl-ACP can also act as a substrate although octanoyl-ACP is likely to be the physiological substrate. In Pseudarthrobacter chlorophenolicus (strain ATCC 700700 / DSM 12829 / CIP 107037 / JCM 12360 / KCTC 9906 / NCIMB 13794 / A6) (Arthrobacter chlorophenolicus), this protein is Octanoyltransferase.